We begin with the raw amino-acid sequence, 70 residues long: Cytochrome c oxidase subunit 8B, mitochondrial (70 aa).

A mitochondrion-targeting transit peptide spans 1-24 (MPRLPPILRLLQAPAKFTVVPKAH). Residues 25-38 (VSAKPAKTPTSAVE) lie on the Mitochondrial matrix side of the membrane. Residues 39–60 (QAVGISAIVVGFMVPAGWVLAH) traverse the membrane as a helical segment. Residues 61 to 70 (LESYKKSSAA) lie on the Mitochondrial intermembrane side of the membrane.

It belongs to the cytochrome c oxidase VIII family. Component of the cytochrome c oxidase (complex IV, CIV), a multisubunit enzyme composed of 14 subunits. The complex is composed of a catalytic core of 3 subunits MT-CO1, MT-CO2 and MT-CO3, encoded in the mitochondrial DNA, and 11 supernumerary subunits COX4I, COX5A, COX5B, COX6A, COX6B, COX6C, COX7A, COX7B, COX7C, COX8 and NDUFA4, which are encoded in the nuclear genome. The complex exists as a monomer or a dimer and forms supercomplexes (SCs) in the inner mitochondrial membrane with NADH-ubiquinone oxidoreductase (complex I, CI) and ubiquinol-cytochrome c oxidoreductase (cytochrome b-c1 complex, complex III, CIII), resulting in different assemblies (supercomplex SCI(1)III(2)IV(1) and megacomplex MCI(2)III(2)IV(2)).

It localises to the mitochondrion inner membrane. It functions in the pathway energy metabolism; oxidative phosphorylation. Component of the cytochrome c oxidase, the last enzyme in the mitochondrial electron transport chain which drives oxidative phosphorylation. The respiratory chain contains 3 multisubunit complexes succinate dehydrogenase (complex II, CII), ubiquinol-cytochrome c oxidoreductase (cytochrome b-c1 complex, complex III, CIII) and cytochrome c oxidase (complex IV, CIV), that cooperate to transfer electrons derived from NADH and succinate to molecular oxygen, creating an electrochemical gradient over the inner membrane that drives transmembrane transport and the ATP synthase. Cytochrome c oxidase is the component of the respiratory chain that catalyzes the reduction of oxygen to water. Electrons originating from reduced cytochrome c in the intermembrane space (IMS) are transferred via the dinuclear copper A center (CU(A)) of subunit 2 and heme A of subunit 1 to the active site in subunit 1, a binuclear center (BNC) formed by heme A3 and copper B (CU(B)). The BNC reduces molecular oxygen to 2 water molecules using 4 electrons from cytochrome c in the IMS and 4 protons from the mitochondrial matrix. The protein is Cytochrome c oxidase subunit 8B, mitochondrial (Cox8b) of Mus musculus (Mouse).